Consider the following 198-residue polypeptide: Probable opine utilization operon repressor (198 aa).

It functions in the pathway opine metabolism; mannopine biosynthesis [regulation]. In terms of biological role, possible repressor for genes for mannityl-opine utilization and / or plasmid conjugative transfer. The polypeptide is Probable opine utilization operon repressor (opnR) (Rhizobium rhizogenes (Agrobacterium rhizogenes)).